We begin with the raw amino-acid sequence, 479 residues long: Zinc finger and SCAN domain-containing protein 26 (479 aa).

Residue Lys17 forms a Glycyl lysine isopeptide (Lys-Gly) (interchain with G-Cter in SUMO2) linkage. One can recognise an SCAN box domain in the interval 51-133 (CKRFRQLRYE…VFLEDLQLEL (83 aa)). Residues 155 to 187 (TAPGKATPERQVQPEGDVPQPEREKGEAKRIEN) form a disordered region. The segment covering 174–187 (QPEREKGEAKRIEN) has biased composition (basic and acidic residues). The C2H2-type 1; degenerate zinc-finger motif lies at 232 to 254 (CKCSEYGQAFFQHSDLIKHESSH). 7 C2H2-type zinc fingers span residues 283–305 (HQCH…QKIH), 311–333 (YQCK…LRIH), 339–361 (YLCI…QRIH), 367–389 (CQCK…QRIH), 395–417 (HQCN…HRIH), 423–445 (FKCT…VRIH), and 451–473 (YKCN…QRYH).

It localises to the nucleus. Functionally, may be involved in transcriptional regulation. In Bos taurus (Bovine), this protein is Zinc finger and SCAN domain-containing protein 26 (ZSCAN26).